Consider the following 545-residue polypeptide: MSTSLNYKSFSKEQQTMDNLEKQLICPICLEMFTKPVVILPCQHNLCRKCASDIFQASNPYLPTRGGTTVASGGRFRCPSCRHEVVLDRHGVYGLQRNLLVENIIDIYKQESTRPEKKLDQPMCEEHEEERINIYCLNCEVPTCSLCKVFGAHKDCQVAPLTHVFQRQKSELSDGIAVLVGSNDRVQGVISQLEDTCKTIEECCRKQKQDLCEKFDHLYSILEERKTEMTQAITRTQEEKLEHVRTLIRKYSDHLENVSKLVESGIQFMDEPEMAVFLQNAKTLLQKITEASKAFQMEKIEQGYEIMNNFTVNLNREEKIIREIDFSREEEDEDDEGEVDEEGEGEDAVEVEEAENVQVASSGEEETLEKAAEPSELAAEIQAASGPLLASSPDSVSSLPPAADVLVTQGEVVPTDSQQTTQSETSGPSAAETADPLFYPSWYKGQSRKMISNPPHTPGGEGLSQIGPSAAEDSSVQSAEVAEAAANEQAAVSGKESSSTAATSQIGFEASSPQGQAAALGSGGGADSEPARHVFSFSWLNSLNE.

An RING-type zinc finger spans residues 26–82 (CPICLEMFTKPVVILPCQHNLCRKCASDIFQASNPYLPTRGGTTVASGGRFRCPSCR). The B box-type zinc finger occupies 119–161 (LDQPMCEEHEEERINIYCLNCEVPTCSLCKVFGAHKDCQVAPL). Cys-124, His-127, Cys-147, and His-153 together coordinate Zn(2+). Positions 219-258 (YSILEERKTEMTQAITRTQEEKLEHVRTLIRKYSDHLENV) form a coiled coil. A COS domain is found at 269 to 327 (MDEPEMAVFLQNAKTLLQKITEASKAFQMEKIEQGYEIMNNFTVNLNREEKIIREIDFS). Disordered regions lie at residues 324 to 378 (IDFS…SELA) and 406 to 528 (LVTQ…GADS). The span at 328–355 (REEEDEDDEGEVDEEGEGEDAVEVEEAE) shows a compositional bias: acidic residues. 2 stretches are compositionally biased toward low complexity: residues 417-426 (SQQTTQSETS) and 469-493 (SAAEDSSVQSAEVAEAAANEQAAVS). The segment covering 495–506 (KESSSTAATSQI) has biased composition (polar residues). Over residues 510–520 (ASSPQGQAAAL) the composition is skewed to low complexity.

In terms of assembly, homooligomer and heterooligomer. Interacts with titin/TTN. Interacts with myosins. Interacts with SQSTM1 and NBR1. Probably interacts with TRIM63 and TRIM54. Post-translationally, targeted for degradation through the proteasomal and lysosomal pathways in the presence of SUMO3.

Its subcellular location is the nucleus. It is found in the cytoplasm. The catalysed reaction is S-ubiquitinyl-[E2 ubiquitin-conjugating enzyme]-L-cysteine + [acceptor protein]-L-lysine = [E2 ubiquitin-conjugating enzyme]-L-cysteine + N(6)-ubiquitinyl-[acceptor protein]-L-lysine.. Functionally, E3 ubiquitin ligase that plays an important role in regulating cardiac development and contractility, muscle growth, metabolism, and fiber-type differentiation. Acts as a critical factor that regulates cardiomyocyte size during development in concert with TRIM63 by regulating E2F1-mediated gene expression. Plays a role in apoptosis induction in cardiomyocytes by promoting ubiquitination of the DUSP1 phosphatase. Promotes non-canonical NF-kappa-B signaling and B-cell-mediated immune responses by mediating NFKB2 'Lys-48'-linked ubiquitination and processing. In turn, NFKB2 is further processed by valosin-containing protein/VCP, an ATPase that mediates ubiquitin-dependent protein degradation by the proteasome. May play a role in preventing macrophages from producing inflammatory factors and migrating by downregulating the level of nuclear NF-kappa-B subunit RELA. Also modifies PPARG via polyubiquitination and accelerates PPARG proteasomal degradation to inhibit its activity. This Rattus norvegicus (Rat) protein is Tripartite motif-containing protein 55 (Trim55).